The following is a 371-amino-acid chain: MPGCPCPGCGMAGPRLLFLTALALELLERAGGSQPALRSRGTATACRLDNKESESWGALLSGERLDTWICSLLGSLMVGLSGVFPLLVIPLEMGTMLRSEAGAWRLKQLLSFALGGLLGNVFLHLLPEAWAYTCSASPGGEGQSLQQQQQLGLWVIAGILTFLALEKMFLDSKEEGTSQAPNKDPTAAAAALNGGHCLAQPAAEPGLGAVVRSIKVSGYLNLLANTIDNFTHGLAVAASFLVSKKIGLLTTMAILLHEIPHEVGDFAILLRAGFDRWSAAKLQLSTALGGLLGAGFAICTQSPKGVVGCSPAAEETAAWVLPFTSGGFLYIALVNVLPDLLEEEDPWRSLQQLLLLCAGIVVMVLFSLFVD.

The Lumenal portion of the chain corresponds to 1-7 (MPGCPCP). A helical transmembrane segment spans residues 8–28 (GCGMAGPRLLFLTALALELLE). Residues 29–68 (RAGGSQPALRSRGTATACRLDNKESESWGALLSGERLDTW) are Cytoplasmic-facing. Residues 69–89 (ICSLLGSLMVGLSGVFPLLVI) form a helical membrane-spanning segment. Topologically, residues 90–108 (PLEMGTMLRSEAGAWRLKQ) are lumenal. The chain crosses the membrane as a helical span at residues 109 to 129 (LLSFALGGLLGNVFLHLLPEA). Topologically, residues 130–149 (WAYTCSASPGGEGQSLQQQQ) are cytoplasmic. A helical membrane pass occupies residues 150-170 (QLGLWVIAGILTFLALEKMFL). The Lumenal segment spans residues 171–235 (DSKEEGTSQA…TIDNFTHGLA (65 aa)). Residues 236–256 (VAASFLVSKKIGLLTTMAILL) form a helical membrane-spanning segment. The XEXPHE-motif motif lies at 257–262 (HEIPHE). Residues 257–278 (HEIPHEVGDFAILLRAGFDRWS) lie on the Cytoplasmic side of the membrane. The helical transmembrane segment at 279–299 (AAKLQLSTALGGLLGAGFAIC) threads the bilayer. Residues 300-316 (TQSPKGVVGCSPAAEET) are Lumenal-facing. The helical transmembrane segment at 317–337 (AAWVLPFTSGGFLYIALVNVL) threads the bilayer. Topologically, residues 338-349 (PDLLEEEDPWRS) are cytoplasmic. A helical transmembrane segment spans residues 350–370 (LQQLLLLCAGIVVMVLFSLFV). Position 371 (Asp371) is a topological domain, lumenal.

This sequence belongs to the ZIP transporter (TC 2.A.5) family. In terms of assembly, homodimer.

It is found in the golgi apparatus membrane. The protein resides in the cytoplasmic vesicle membrane. It localises to the endoplasmic reticulum membrane. It catalyses the reaction Zn(2+)(in) = Zn(2+)(out). Functionally, functions as a zinc transporter transporting Zn(2+) from the Golgi apparatus to the cytosol and thus influences the zinc level at least in areas of the cytosol. May regulate beige adipocyte differentiation. In Homo sapiens (Human), this protein is Zinc transporter ZIP13.